The chain runs to 277 residues: Large ribosomal subunit protein uL2 (277 aa).

Residues 222-277 form a disordered region; the sequence is GVTMNPVDHPHGGGEGRTSGGRNPVTPWGFPTKGKKTRNNKATDKFIVSSRHKRKK.

The protein belongs to the universal ribosomal protein uL2 family. Part of the 50S ribosomal subunit. Forms a bridge to the 30S subunit in the 70S ribosome.

Functionally, one of the primary rRNA binding proteins. Required for association of the 30S and 50S subunits to form the 70S ribosome, for tRNA binding and peptide bond formation. It has been suggested to have peptidyltransferase activity; this is somewhat controversial. Makes several contacts with the 16S rRNA in the 70S ribosome. This Xanthobacter autotrophicus (strain ATCC BAA-1158 / Py2) protein is Large ribosomal subunit protein uL2.